Here is a 611-residue protein sequence, read N- to C-terminus: Major facilitator superfamily domain-containing protein YCR023C (611 aa).

Topologically, residues Met1–Lys89 are extracellular. The helical transmembrane segment at Ile90–Arg110 threads the bilayer. Topologically, residues Asn111–Thr152 are cytoplasmic. A helical transmembrane segment spans residues Met153–Phe173. Residues Arg174 to Ala199 are Extracellular-facing. Residues Leu200–Leu220 form a helical membrane-spanning segment. Residues Glu221 to Lys353 are Cytoplasmic-facing. Residues Asp261–Glu271 show a composition bias toward basic and acidic residues. The segment at Asp261–Ile301 is disordered. Ser313 carries the phosphoserine modification. Residues Val354–Asn372 traverse the membrane as a helical segment. Residues Glu373–Gly413 lie on the Extracellular side of the membrane. Residues Thr414 to Val434 form a helical membrane-spanning segment. At Asp435–Thr442 the chain is on the cytoplasmic side. The helical transmembrane segment at Ile443–Phe463 threads the bilayer. Topologically, residues Leu464–Asp542 are extracellular. A helical transmembrane segment spans residues Val543–Tyr563. Residues Lys564 to Thr611 lie on the Cytoplasmic side of the membrane. Ser603 carries the phosphoserine modification.

The protein belongs to the major facilitator superfamily.

It is found in the membrane. The catalysed reaction is chloride(in) = chloride(out). In terms of biological role, outward-rectifying chloride channel involved in chloride homeostasis. This Saccharomyces cerevisiae (strain ATCC 204508 / S288c) (Baker's yeast) protein is Major facilitator superfamily domain-containing protein YCR023C.